The chain runs to 120 residues: Spermidine export protein MdtJ (120 aa).

Transmembrane regions (helical) follow at residues 1 to 21, 31 to 51, 54 to 74, and 81 to 101; these read MFYWILLALAIVAEITGTLSM, TGFILMLVMISLSYIFLSFAV, IALGVAYALWEGIGILLITLF, and EALSTMKIAGLATLVVGIVLI.

This sequence belongs to the drug/metabolite transporter (DMT) superfamily. Small multidrug resistance (SMR) (TC 2.A.7.1) family. MdtJ subfamily. As to quaternary structure, forms a complex with MdtI.

It localises to the cell inner membrane. In terms of biological role, catalyzes the excretion of spermidine. The chain is Spermidine export protein MdtJ from Enterobacter sp. (strain 638).